A 360-amino-acid chain; its full sequence is Phenylalanine--tRNA ligase alpha subunit (360 aa).

A Mg(2+)-binding site is contributed by glutamate 260.

It belongs to the class-II aminoacyl-tRNA synthetase family. Phe-tRNA synthetase alpha subunit type 1 subfamily. In terms of assembly, tetramer of two alpha and two beta subunits. It depends on Mg(2+) as a cofactor.

It is found in the cytoplasm. The enzyme catalyses tRNA(Phe) + L-phenylalanine + ATP = L-phenylalanyl-tRNA(Phe) + AMP + diphosphate + H(+). This Rhodopseudomonas palustris (strain ATCC BAA-98 / CGA009) protein is Phenylalanine--tRNA ligase alpha subunit.